The following is a 104-amino-acid chain: Putative thioredoxin-4 (104 aa).

In terms of domain architecture, Thioredoxin spans 2–104; the sequence is SKVTNVSINT…QLRKILDSMK (103 aa). Active-site nucleophile residues include C31 and C34. Cysteines 31 and 34 form a disulfide.

The protein belongs to the thioredoxin family.

Participates in various redox reactions through the reversible oxidation of its active center dithiol to a disulfide and catalyzes dithiol-disulfide exchange reactions. This Dictyostelium discoideum (Social amoeba) protein is Putative thioredoxin-4 (trxD).